Here is a 333-residue protein sequence, read N- to C-terminus: Glycogenin-1 (333 aa).

Threonine 2 carries the N-acetylthreonine modification. UDP-binding residues include leucine 9, threonine 11, asparagine 12, and tyrosine 15. 4 residues coordinate UDP-alpha-D-glucose: leucine 9, threonine 11, asparagine 12, and tyrosine 15. Serine 44 carries the phosphoserine; by PKA; in vitro modification. Arginine 77 is a UDP binding site. Residues arginine 77, lysine 86, aspartate 102, alanine 103, aspartate 104, asparagine 133, serine 134, aspartate 160, aspartate 163, and glutamine 164 each contribute to the UDP-alpha-D-glucose site. 3 residues coordinate UDP: aspartate 102, alanine 103, and aspartate 104. A Mn(2+)-binding site is contributed by aspartate 102. Position 104 (aspartate 104) interacts with Mn(2+). The O-linked (Glc...) tyrosine glycan is linked to tyrosine 195. Histidine 212, glycine 215, and lysine 218 together coordinate UDP. Histidine 212 lines the Mn(2+) pocket. UDP-alpha-D-glucose-binding residues include glycine 215 and lysine 218. Residues 284–316 (SHLSLGETPATTQPFVSSEERKERWEQGQADYM) are interaction with GYS1.

It belongs to the glycosyltransferase 8 family. Glycogenin subfamily. Part of the GYS1-GYG1 complex, a heterooctamer composed of a tetramer of GYS1 and 2 dimers of GYG1, where each GYS1 protomer binds to one GYG1 subunit (via GYG1 C-terminus); the GYS1 tetramer may dissociate from GYG1 dimers to continue glycogen polymerization on its own. May also form a heterooctamer complex with GYS2 (via GYG1 C-terminus). Requires Mn(2+) as cofactor. Post-translationally, self-glycosylated by the transfer of glucose residues from UDP-glucose to itself, forming an alpha-1,4-glycan of around 10 residues attached to Tyr-195. In terms of processing, phosphorylated. As to expression, detected in heart, skeletal muscle, brain and testis, and at lower levels in kidney.

Its subcellular location is the cytoplasm. It localises to the nucleus. It catalyses the reaction L-tyrosyl-[glycogenin] + UDP-alpha-D-glucose = alpha-D-glucosyl-L-tyrosyl-[glycogenin] + UDP + H(+). It carries out the reaction [1,4-alpha-D-glucosyl](n)-L-tyrosyl-[glycogenin] + UDP-alpha-D-glucose = [1,4-alpha-D-glucosyl](n+1)-L-tyrosyl-[glycogenin] + UDP + H(+). It functions in the pathway glycan biosynthesis; glycogen biosynthesis. Glycogenin participates in the glycogen biosynthetic process along with glycogen synthase and glycogen branching enzyme. It catalyzes the formation of a short alpha (1,4)-glucosyl chain covalently attached via a glucose 1-O-tyrosyl linkage to internal tyrosine residues and these chains act as primers for the elongation reaction catalyzed by glycogen synthase. In Oryctolagus cuniculus (Rabbit), this protein is Glycogenin-1 (GYG1).